The sequence spans 320 residues: Cytochrome f (320 aa).

Residues 1–35 form the signal peptide; sequence MQTRKTFSWIKEQIARSISVSLLIYIITRTSISSA. Residues tyrosine 36, cysteine 56, cysteine 59, and histidine 60 each coordinate heme. The chain crosses the membrane as a helical span at residues 286–306; that stretch reads VQGLLFFLASVILAQIFLVLK.

It belongs to the cytochrome f family. The 4 large subunits of the cytochrome b6-f complex are cytochrome b6, subunit IV (17 kDa polypeptide, petD), cytochrome f and the Rieske protein, while the 4 small subunits are PetG, PetL, PetM and PetN. The complex functions as a dimer. Heme is required as a cofactor.

It localises to the plastid. Its subcellular location is the chloroplast thylakoid membrane. Component of the cytochrome b6-f complex, which mediates electron transfer between photosystem II (PSII) and photosystem I (PSI), cyclic electron flow around PSI, and state transitions. The chain is Cytochrome f from Jasminum nudiflorum (Winter jasmine).